The following is a 443-amino-acid chain: Phenylalanine--tRNA ligase alpha subunit (443 aa).

L-phenylalanine contacts are provided by residues T332, 375-377 (QVE), and Y415. E417 serves as a coordination point for Mg(2+). Residue F441 participates in L-phenylalanine binding.

The protein belongs to the class-II aminoacyl-tRNA synthetase family. Phe-tRNA synthetase alpha subunit type 2 subfamily. Heterotetramer; dimer of two heterodimers formed by FARSA and FARSB. Mg(2+) is required as a cofactor.

The protein resides in the cytoplasm. The enzyme catalyses tRNA(Phe) + L-phenylalanine + ATP = L-phenylalanyl-tRNA(Phe) + AMP + diphosphate + H(+). The chain is Phenylalanine--tRNA ligase alpha subunit (FARSA) from Gallus gallus (Chicken).